The following is an 83-amino-acid chain: ATP synthase subunit c (83 aa).

2 helical membrane-spanning segments follow: residues 10 to 30 (IAVA…FGLL) and 52 to 72 (MFIV…IALY).

Belongs to the ATPase C chain family. As to quaternary structure, F-type ATPases have 2 components, F(1) - the catalytic core - and F(0) - the membrane proton channel. F(1) has five subunits: alpha(3), beta(3), gamma(1), delta(1), epsilon(1). F(0) has three main subunits: a(1), b(2) and c(10-14). The alpha and beta chains form an alternating ring which encloses part of the gamma chain. F(1) is attached to F(0) by a central stalk formed by the gamma and epsilon chains, while a peripheral stalk is formed by the delta and b chains.

The protein localises to the cell inner membrane. In terms of biological role, f(1)F(0) ATP synthase produces ATP from ADP in the presence of a proton or sodium gradient. F-type ATPases consist of two structural domains, F(1) containing the extramembraneous catalytic core and F(0) containing the membrane proton channel, linked together by a central stalk and a peripheral stalk. During catalysis, ATP synthesis in the catalytic domain of F(1) is coupled via a rotary mechanism of the central stalk subunits to proton translocation. Key component of the F(0) channel; it plays a direct role in translocation across the membrane. A homomeric c-ring of between 10-14 subunits forms the central stalk rotor element with the F(1) delta and epsilon subunits. This Shewanella amazonensis (strain ATCC BAA-1098 / SB2B) protein is ATP synthase subunit c.